A 273-amino-acid polypeptide reads, in one-letter code: Ribosomal RNA small subunit methyltransferase A (273 aa).

Asn-18, Leu-20, Gly-45, Glu-66, Asp-91, and Asn-113 together coordinate S-adenosyl-L-methionine.

It belongs to the class I-like SAM-binding methyltransferase superfamily. rRNA adenine N(6)-methyltransferase family. RsmA subfamily.

The protein resides in the cytoplasm. It carries out the reaction adenosine(1518)/adenosine(1519) in 16S rRNA + 4 S-adenosyl-L-methionine = N(6)-dimethyladenosine(1518)/N(6)-dimethyladenosine(1519) in 16S rRNA + 4 S-adenosyl-L-homocysteine + 4 H(+). In terms of biological role, specifically dimethylates two adjacent adenosines (A1518 and A1519) in the loop of a conserved hairpin near the 3'-end of 16S rRNA in the 30S particle. May play a critical role in biogenesis of 30S subunits. The sequence is that of Ribosomal RNA small subunit methyltransferase A from Escherichia coli O157:H7.